A 185-amino-acid polypeptide reads, in one-letter code: Probable DNA-directed RNA polymerase subunit delta (185 aa).

An HTH HARE-type domain is found at 14-81; it reads LSMIEVAHAI…GDNTWGLRAW (68 aa). Residues 90–185 form a disordered region; the sequence is ATVGENEEDE…DEEDEDEDDE (96 aa). Composition is skewed to acidic residues over residues 117–167 and 175–185; these read DTDD…DDGI and HDEEDEDEDDE.

Belongs to the RpoE family. As to quaternary structure, RNAP is composed of a core of 2 alpha, a beta and a beta' subunits. The core is associated with a delta subunit and one of several sigma factors.

Participates in both the initiation and recycling phases of transcription. In the presence of the delta subunit, RNAP displays an increased specificity of transcription, a decreased affinity for nucleic acids, and an increased efficiency of RNA synthesis because of enhanced recycling. This is Probable DNA-directed RNA polymerase subunit delta from Limosilactobacillus reuteri (strain DSM 20016) (Lactobacillus reuteri).